The chain runs to 526 residues: Bifunctional purine biosynthesis protein PurH (526 aa).

The region spanning 1–148 (MSLNNIIKNA…KNYKDVIVIV (148 aa)) is the MGS-like domain.

This sequence belongs to the PurH family.

It carries out the reaction (6R)-10-formyltetrahydrofolate + 5-amino-1-(5-phospho-beta-D-ribosyl)imidazole-4-carboxamide = 5-formamido-1-(5-phospho-D-ribosyl)imidazole-4-carboxamide + (6S)-5,6,7,8-tetrahydrofolate. The enzyme catalyses IMP + H2O = 5-formamido-1-(5-phospho-D-ribosyl)imidazole-4-carboxamide. The protein operates within purine metabolism; IMP biosynthesis via de novo pathway; 5-formamido-1-(5-phospho-D-ribosyl)imidazole-4-carboxamide from 5-amino-1-(5-phospho-D-ribosyl)imidazole-4-carboxamide (10-formyl THF route): step 1/1. It participates in purine metabolism; IMP biosynthesis via de novo pathway; IMP from 5-formamido-1-(5-phospho-D-ribosyl)imidazole-4-carboxamide: step 1/1. In Buchnera aphidicola subsp. Schizaphis graminum (strain Sg), this protein is Bifunctional purine biosynthesis protein PurH.